The sequence spans 123 residues: WAP four-disulfide core domain protein 5 (123 aa).

The first 24 residues, 1–24 (MRFGRLLLLAVLLAGVSQLPAVSG), serve as a signal peptide directing secretion. WAP domains are found at residues 27 to 74 (KGEK…IPRV) and 75 to 121 (SVKL…RDPV). Intrachain disulfides connect Cys-34–Cys-62, Cys-41–Cys-66, Cys-49–Cys-61, Cys-55–Cys-70, Cys-81–Cys-109, Cys-88–Cys-113, Cys-96–Cys-108, and Cys-102–Cys-117.

The protein localises to the secreted. Its function is as follows. Putative acid-stable proteinase inhibitor. In Otolemur garnettii (Small-eared galago), this protein is WAP four-disulfide core domain protein 5 (WFDC5).